The following is a 450-amino-acid chain: UPF0210 protein CPF_1748 (450 aa).

This sequence belongs to the UPF0210 family. As to quaternary structure, homodimer.

In Clostridium perfringens (strain ATCC 13124 / DSM 756 / JCM 1290 / NCIMB 6125 / NCTC 8237 / Type A), this protein is UPF0210 protein CPF_1748.